The primary structure comprises 86 residues: UPF0457 protein BCE33L2265 (86 aa).

The protein belongs to the UPF0457 family.

The protein is UPF0457 protein BCE33L2265 of Bacillus cereus (strain ZK / E33L).